We begin with the raw amino-acid sequence, 339 residues long: Biotin synthase (339 aa).

One can recognise a Radical SAM core domain in the interval 51–278 (TEVELATLLS…KARVRLSAGR (228 aa)). [4Fe-4S] cluster contacts are provided by Cys66, Cys70, and Cys73. [2Fe-2S] cluster-binding residues include Cys110, Cys141, Cys201, and Arg273.

Belongs to the radical SAM superfamily. Biotin synthase family. As to quaternary structure, homodimer. The cofactor is [4Fe-4S] cluster. It depends on [2Fe-2S] cluster as a cofactor.

It carries out the reaction (4R,5S)-dethiobiotin + (sulfur carrier)-SH + 2 reduced [2Fe-2S]-[ferredoxin] + 2 S-adenosyl-L-methionine = (sulfur carrier)-H + biotin + 2 5'-deoxyadenosine + 2 L-methionine + 2 oxidized [2Fe-2S]-[ferredoxin]. It participates in cofactor biosynthesis; biotin biosynthesis; biotin from 7,8-diaminononanoate: step 2/2. Functionally, catalyzes the conversion of dethiobiotin (DTB) to biotin by the insertion of a sulfur atom into dethiobiotin via a radical-based mechanism. The chain is Biotin synthase from Janthinobacterium sp. (strain Marseille) (Minibacterium massiliensis).